We begin with the raw amino-acid sequence, 111 residues long: Histone H2A-Bbd type 1 (111 aa).

It belongs to the histone H2A family. As to quaternary structure, the nucleosome is a histone octamer containing two molecules each of H2A, H2B, H3 and H4 assembled in one H3-H4 heterotetramer and two H2A-H2B heterodimers. Incorporated into nucleosomes during late spermatogenesis. Interacts with H2BC1/TH2B; preferentially dimerizes with H2BC1/TH2B to form nucleosomes. Highly expressed in adult testis, mainly in spermatocytes.

The protein resides in the nucleus. The protein localises to the chromosome. Its function is as follows. Atypical histone H2A which replaces conventional H2A during late spermatogenesis and is involved in the replacement of histones to protamine in male germ cells. Core component of nucleosome: nucleosomes wrap and compact DNA into chromatin, limiting DNA accessibility to the cellular machineries which require DNA as a template. Nucleosomes containing H2AB1 only wrap 130 bp of DNA, compared to 147 bp for classical nucleosomes. In condensing spermatids, the heterodimer between H2AB1 and H2BC1/TH2B is loaded onto the nucleosomes and promotes loading of transition proteins (TNP1 and TNP2) onto the nucleosomes. Inclusion of the H2AB1-H2BC1/TH2B dimer into chromatin opens the nucleosomes, releasing the nucleosomal DNA ends and allowing the invasion of nucleosomes by transition proteins (TNP1 and TNP2). Then, transition proteins drive the recruitment and processing of protamines, which are responsible for histone eviction. The chain is Histone H2A-Bbd type 1 (H2ab1) from Mus musculus (Mouse).